Reading from the N-terminus, the 549-residue chain is Cation/acetate symporter ActP (549 aa).

Transmembrane regions (helical) follow at residues 33–53 (WQAI…TYWA), 77–97 (LAIA…ALVF), 103–123 (GLIY…LIAE), 148–168 (ILSA…QMVG), 183–203 (IAVV…GMLA), 206–226 (WVQI…AFMV), 262–282 (ISAL…PHIL), 303–323 (GFMG…IMLV), 355–375 (LFLG…VAGL), 404–424 (VSKI…VLFE), 428–448 (IAFM…PIIL), 464–484 (GGWL…TIWV), and 493–513 (IFPY…GIWF).

This sequence belongs to the sodium:solute symporter (SSF) (TC 2.A.21) family.

Its subcellular location is the cell inner membrane. Its function is as follows. Transports acetate. This Escherichia coli O17:K52:H18 (strain UMN026 / ExPEC) protein is Cation/acetate symporter ActP.